A 1816-amino-acid chain; its full sequence is Kinesin-like protein KIF1B (1816 aa).

Ser2 is subject to N-acetylserine. One can recognise a Kinesin motor domain in the interval 5–354 (SVKVAVRVRP…LRYADRAKQI (350 aa)). 97-104 (GQTGAGKS) is a binding site for ATP. The segment at 270-350 (NINKSLTTLG…TLSTLRYADR (81 aa)) is interaction with KIFBP. Coiled-coil stretches lie at residues 365 to 386 (NAKL…LRAQ) and 470 to 502 (GEEA…EAIR). Positions 556–612 (TRVGQADAERRQDIVLSGAHIKEEHCLFRSERSNTGEVIVTLEPCERSETYVNGKRV) constitute an FHA domain. Phosphothreonine occurs at positions 647 and 652. 2 coiled-coil regions span residues 668 to 737 (EKQG…EEEV) and 841 to 869 (SLDK…AQDD). Residues Ser1054, Ser1057, Ser1416, Ser1454, and Ser1487 each carry the phosphoserine modification. Residues 1522–1571 (VPKSLSDSLSPSLSSGTLSTSTSISSQISTTTFESAITPSESSGYDSADV) form a disordered region. The segment covering 1525-1553 (SLSDSLSPSLSSGTLSTSTSISSQISTTT) has biased composition (low complexity). The segment covering 1554 to 1566 (FESAITPSESSGY) has biased composition (polar residues). Phosphoserine is present on residues Ser1573, Ser1603, Ser1610, and Ser1613. Residues 1620–1637 (SVSSFSSSTLTPSSTCPS) show a composition bias toward low complexity. The interval 1620-1659 (SVSSFSSSTLTPSSTCPSLVDSRSSSMDQKTPEANSRASS) is disordered. Residues 1640–1659 (DSRSSSMDQKTPEANSRASS) show a composition bias toward polar residues. A PH domain is found at 1702-1799 (VSKKGYLHFK…WLYAFNPLLA (98 aa)).

This sequence belongs to the TRAFAC class myosin-kinesin ATPase superfamily. Kinesin family. Unc-104 subfamily. In terms of assembly, monomer. Interacts with KIFBP; positively regulates KIF1B microtubule motor activity. Interacts (via C-terminus end of the kinesin-motor domain) with CHP1; the interaction occurs in a calcium-dependent manner. As to quaternary structure, interacts with MADD (via death domain); links this isoform to Rab3-carrying vesicles in anterograde synaptic vesicle transport. As to expression, expressed in the brain (at protein level).

The protein resides in the cytoplasm. It localises to the cytoskeleton. Its subcellular location is the cytoplasmic vesicle. It is found in the secretory vesicle. The protein localises to the synaptic vesicle membrane. The protein resides in the mitochondrion. The catalysed reaction is ATP + H2O + a kinesin associated with a microtubule at position (n) = ADP + phosphate a kinesin associated with a microtubule at position (n+1, toward the plus end).. Has a plus-end-directed microtubule motor activity and functions as a motor for transport of vesicles and organelles along microtubules. In terms of biological role, has a plus-end-directed microtubule motor activity and functions as a motor for anterograde synaptic vesicle transport along axonal microtubules from the cell body to the presynapse in neuronal cells. Functions as a downstream effector in a developmental apoptotic pathway that is activated when nerve growth factor (NGF) becomes limiting for neuronal progenitor cells. Functionally, has a plus-end-directed microtubule motor activity and functions as a motor for anterograde transport of mitochondria. The sequence is that of Kinesin-like protein KIF1B from Mus musculus (Mouse).